The primary structure comprises 689 residues: uncharacterized protein (689 aa).

4 disordered regions span residues 121 to 206 (LALK…VDPS), 286 to 305 (ASSN…PMDN), 322 to 414 (NSYS…SMAH), and 552 to 611 (AAMP…HLSD). Residues 133 to 158 (SPNNSIPLMANSCLLSADNSSSSTTS) show a composition bias toward low complexity. Positions 322–380 (NSYSYDRYTPNQPSYLESKPGNHQPSYTSEQPMYSTASVPQQISNGPTAVNGLPMNSYT) are enriched in polar residues. 2 stretches are compositionally biased toward low complexity: residues 381–411 (PHSN…SSPS) and 560–572 (PSAH…PSPH).

The protein resides in the cytoplasm. This is an uncharacterized protein from Schizosaccharomyces pombe (strain 972 / ATCC 24843) (Fission yeast).